We begin with the raw amino-acid sequence, 99 residues long: Large ribosomal subunit protein uL23 (99 aa).

It belongs to the universal ribosomal protein uL23 family. In terms of assembly, part of the 50S ribosomal subunit. Contacts protein L29, and trigger factor when it is bound to the ribosome.

Functionally, one of the early assembly proteins it binds 23S rRNA. One of the proteins that surrounds the polypeptide exit tunnel on the outside of the ribosome. Forms the main docking site for trigger factor binding to the ribosome. This is Large ribosomal subunit protein uL23 from Francisella philomiragia subsp. philomiragia (strain ATCC 25017 / CCUG 19701 / FSC 153 / O#319-036).